Here is a 376-residue protein sequence, read N- to C-terminus: Cytochrome b (376 aa).

A run of 4 helical transmembrane segments spans residues 28–48 (YGFL…FLAS), 72–94 (WCFR…LHIL), 107–127 (SWIS…VGYV), and 169–189 (FFVL…IHIF). Heme b contacts are provided by His78 and His92. Heme b-binding residues include His173 and His187. His192 provides a ligand contact to a ubiquinone. Helical transmembrane passes span 214–234 (LLSL…IQSL), 274–294 (VPSK…LFLL), 317–337 (VPII…CQLP), and 340–360 (IFIL…LFVL).

It belongs to the cytochrome b family. As to quaternary structure, the main subunits of complex b-c1 are: cytochrome b, cytochrome c1 and the Rieske protein. It depends on heme b as a cofactor.

It is found in the mitochondrion inner membrane. Its function is as follows. Component of the ubiquinol-cytochrome c reductase complex (complex III or cytochrome b-c1 complex) that is part of the mitochondrial respiratory chain. The b-c1 complex mediates electron transfer from ubiquinol to cytochrome c. Contributes to the generation of a proton gradient across the mitochondrial membrane that is then used for ATP synthesis. This Plasmodium falciparum protein is Cytochrome b (MT-CYB).